Reading from the N-terminus, the 366-residue chain is Inhibin alpha chain (366 aa).

A signal peptide spans 1-20; it reads MVSQRSLLLLLLLTLRDVDS. Residues 21-63 constitute a propeptide that is removed on maturation; that stretch reads CQGPELVRELVLAKVKALFLDALGPPAMDGEGGDPGIRRLPRR. Residues 64–233 constitute a propeptide, inhibin alpha N-terminal region; that stretch reads HAVGGFMHRT…APSAGERARR (170 aa). Asn-147 and Asn-269 each carry an N-linked (GlcNAc...) asparagine glycan. 3 cysteine pairs are disulfide-bonded: Cys-263-Cys-328, Cys-292-Cys-363, and Cys-296-Cys-365.

It belongs to the TGF-beta family. As to quaternary structure, dimeric, linked by one or more disulfide bonds. Activin B is a dimer of alpha and beta-B. Inhibin A is a dimer of alpha and beta-A. Inhibin B is a dimer of alpha and beta-B. Interacts with TGFBR3L; this interaction regulates female fertility. Post-translationally, proteolytic processing yields a number of bioactive forms, consisting either solely of the mature alpha chain, of the most N-terminal propeptide linked through a disulfide bond to the mature alpha chain, or of the entire proprotein.

The protein resides in the secreted. Functionally, inhibins and activins inhibit and activate, respectively, the secretion of follitropin by the pituitary gland. Inhibins/activins are involved in regulating a number of diverse functions such as hypothalamic and pituitary hormone secretion, gonadal hormone secretion, germ cell development and maturation, erythroid differentiation, insulin secretion, nerve cell survival, embryonic axial development or bone growth, depending on their subunit composition. Inhibins appear to oppose the functions of activins. Inhibin A is a dimer of alpha/INHA and beta-A/INHBA that functions as a feedback regulator in the hypothalamic-pituitary-gonadal (HPG) axis. Inhibits the secretion of FSH from the anterior pituitary gland by acting on pituitary gonadotrope cells. Antagonizes activin A by binding to the proteoglycan, betaglycan, and forming a stable complex with and, thereby, sequestering type II activin receptors while excluding type I receptor. In terms of biological role, inhibin B is a dimer of alpha and beta-B that plays a crucial role in the regulation of the reproductive system by inhibiting the secretion of follicle-stimulating hormone (FSH) from the anterior pituitary gland. Thereby, maintains reproductive homeostasis in both males and females. Acts as a more potent suppressor of FSH release than inhibin A. Functions as competitive receptor antagonist binding activin type II receptors with high affinity in the presence of the TGF-beta type III coreceptor/TGFBR3L. The chain is Inhibin alpha chain (Inha) from Mus musculus (Mouse).